We begin with the raw amino-acid sequence, 214 residues long: ATP-dependent Clp protease proteolytic subunit (214 aa).

Catalysis depends on S113, which acts as the Nucleophile. H138 is an active-site residue.

Belongs to the peptidase S14 family. Fourteen ClpP subunits assemble into 2 heptameric rings which stack back to back to give a disk-like structure with a central cavity, resembling the structure of eukaryotic proteasomes.

Its subcellular location is the cytoplasm. The enzyme catalyses Hydrolysis of proteins to small peptides in the presence of ATP and magnesium. alpha-casein is the usual test substrate. In the absence of ATP, only oligopeptides shorter than five residues are hydrolyzed (such as succinyl-Leu-Tyr-|-NHMec, and Leu-Tyr-Leu-|-Tyr-Trp, in which cleavage of the -Tyr-|-Leu- and -Tyr-|-Trp bonds also occurs).. In terms of biological role, cleaves peptides in various proteins in a process that requires ATP hydrolysis. Has a chymotrypsin-like activity. Plays a major role in the degradation of misfolded proteins. This Teredinibacter turnerae (strain ATCC 39867 / T7901) protein is ATP-dependent Clp protease proteolytic subunit.